A 139-amino-acid chain; its full sequence is Putative pre-16S rRNA nuclease (139 aa).

Belongs to the YqgF nuclease family.

The protein localises to the cytoplasm. Functionally, could be a nuclease involved in processing of the 5'-end of pre-16S rRNA. This is Putative pre-16S rRNA nuclease from Streptococcus pyogenes serotype M2 (strain MGAS10270).